An 83-amino-acid chain; its full sequence is Probable insulin-like peptide alpha-type 2 (83 aa).

Positions 1–21 (MHTTTILICFFIFLVQVSTMD) are cleaved as a signal peptide. Intrachain disulfides connect C32-C66, C44-C79, and C54-C80.

This sequence belongs to the insulin family.

The protein resides in the secreted. This is Probable insulin-like peptide alpha-type 2 (ins-22) from Caenorhabditis elegans.